The following is a 308-amino-acid chain: Carbonic anhydrase 4 (308 aa).

Residues 1-18 (MQLLFALLALGALRPLAG) form the signal peptide. Residues 21–281 (LHWCYEIQAS…LGDRSVFKSQ (261 aa)) enclose the Alpha-carbonic anhydrase domain. 2 cysteine pairs are disulfide-bonded: Cys-24-Cys-34 and Cys-44-Cys-225. The N-linked (GlcNAc...) asparagine glycan is linked to Asn-31. The active-site Proton donor/acceptor is His-86. Zn(2+)-binding residues include His-113, His-115, and His-138. An N-linked (GlcNAc...) asparagine glycan is attached at Asn-192. 221-222 (TT) lines the substrate pocket. Ser-280 carries GPI-anchor amidated serine lipidation. Residues 281–308 (QAAGQLLPLPLPTLLVPTLACVMAGLLR) constitute a propeptide, removed in mature form.

The protein belongs to the alpha-carbonic anhydrase family. Interacts with SLC4A4. Zn(2+) serves as cofactor.

It localises to the cell membrane. The catalysed reaction is hydrogencarbonate + H(+) = CO2 + H2O. With respect to regulation, inhibited by acetazolamide. Catalyzes the reversible hydration of carbon dioxide into bicarbonate and protons and thus is essential to maintaining intracellular and extracellular pH. May stimulate the sodium/bicarbonate transporter activity of SLC4A4 that acts in pH homeostasis. It is essential for acid overload removal from the retina and retina epithelium, and acid release in the choriocapillaris in the choroid. In Oryctolagus cuniculus (Rabbit), this protein is Carbonic anhydrase 4 (CA4).